Here is a 399-residue protein sequence, read N- to C-terminus: S-adenosylmethionine synthase (399 aa).

H17 contributes to the ATP binding site. A Mg(2+)-binding site is contributed by D19. K(+) is bound at residue E45. Residues E58 and Q101 each coordinate L-methionine. The segment at 101–111 (QSADIAMGVDQ) is flexible loop. ATP-binding positions include 177 to 179 (DGK), 244 to 245 (RF), D253, 259 to 260 (RK), A276, and K280. D253 is a binding site for L-methionine. K284 contributes to the L-methionine binding site.

It belongs to the AdoMet synthase family. In terms of assembly, homotetramer; dimer of dimers. The cofactor is Mg(2+). K(+) serves as cofactor.

It is found in the cytoplasm. It catalyses the reaction L-methionine + ATP + H2O = S-adenosyl-L-methionine + phosphate + diphosphate. It participates in amino-acid biosynthesis; S-adenosyl-L-methionine biosynthesis; S-adenosyl-L-methionine from L-methionine: step 1/1. Its function is as follows. Catalyzes the formation of S-adenosylmethionine (AdoMet) from methionine and ATP. The overall synthetic reaction is composed of two sequential steps, AdoMet formation and the subsequent tripolyphosphate hydrolysis which occurs prior to release of AdoMet from the enzyme. The protein is S-adenosylmethionine synthase of Bacillus thuringiensis (strain Al Hakam).